We begin with the raw amino-acid sequence, 324 residues long: MPEQIIVIAMAVSFLITVILSPLFIPFLRRLKFGQSIREEGPKSHQKKSGTPTMGGIMILLSIIATTVWVTAKFSVLSAGTYLLLFVTIGYGVLGFLDDMIKVVMKRNLGLTSRQKFIGQLIIAVIFFFVYRQSGFSTALHIPGTDWSFDLGWAYGVLLLFMLVGGSNAVNLTDGLDGLLAGTAAIAFGAYAVLAWNQGQYDVAVFCVAVVGAVLGFLVFNAHPAKVFMGDTGSLALGGAIAAVAVLTKLELLLVVIGGVFVIETLSVIIQVASFKMTGKRVFRMSPLHHHYELVGWSEWRIVVTFWAVGLLFAMLGIYIEVWI.

Transmembrane regions (helical) follow at residues 5–25 (IIVI…PLFI), 52–72 (PTMG…WVTA), 76–96 (VLSA…VLGF), 117–137 (FIGQ…SGFS), 147–167 (WSFD…VGGS), 176–196 (LDGL…VLAW), 203–223 (VAVF…FNAH), 227–247 (VFMG…VAVL), 250–270 (LELL…SVII), and 302–322 (IVVT…YIEV).

Belongs to the glycosyltransferase 4 family. MraY subfamily. Mg(2+) is required as a cofactor.

The protein localises to the cell membrane. It carries out the reaction UDP-N-acetyl-alpha-D-muramoyl-L-alanyl-gamma-D-glutamyl-meso-2,6-diaminopimeloyl-D-alanyl-D-alanine + di-trans,octa-cis-undecaprenyl phosphate = di-trans,octa-cis-undecaprenyl diphospho-N-acetyl-alpha-D-muramoyl-L-alanyl-D-glutamyl-meso-2,6-diaminopimeloyl-D-alanyl-D-alanine + UMP. Its pathway is cell wall biogenesis; peptidoglycan biosynthesis. Functionally, catalyzes the initial step of the lipid cycle reactions in the biosynthesis of the cell wall peptidoglycan: transfers peptidoglycan precursor phospho-MurNAc-pentapeptide from UDP-MurNAc-pentapeptide onto the lipid carrier undecaprenyl phosphate, yielding undecaprenyl-pyrophosphoryl-MurNAc-pentapeptide, known as lipid I. The sequence is that of Phospho-N-acetylmuramoyl-pentapeptide-transferase from Geobacillus thermodenitrificans (strain NG80-2).